The chain runs to 61 residues: Large ribosomal subunit protein bL28 (61 aa).

The protein belongs to the bacterial ribosomal protein bL28 family.

The protein is Large ribosomal subunit protein bL28 of Geobacillus thermodenitrificans (strain NG80-2).